A 593-amino-acid chain; its full sequence is uncharacterized protein (593 aa).

Transmembrane regions (helical) follow at residues 21 to 41 (PAVF…SVVY), 60 to 80 (VGWW…YCGI), 97 to 117 (FSFW…GLVF), 148 to 168 (MALT…VVGL), 204 to 224 (VDVI…GFGI), 243 to 263 (WMVG…VSGV), 275 to 295 (MALA…LFLL), 328 to 348 (WTIF…MFIA), 359 to 379 (FIGA…TIFG), 410 to 430 (GLPI…FFFV), 457 to 477 (VYWA…GGAG), and 485 to 505 (AAIA…YAMT).

The protein belongs to the BCCT transporter (TC 2.A.15) family.

It is found in the cell membrane. This is an uncharacterized protein from Mycobacterium tuberculosis (strain CDC 1551 / Oshkosh).